The sequence spans 548 residues: Telomerase Cajal body protein 1 (548 aa).

Residues 1 to 142 (MKTLETQPLA…SGEPAAEDEG (142 aa)) form a disordered region. The span at 15–31 (PSDQDPAPAHPSPHASP) shows a compositional bias: low complexity. Phosphoserine is present on residues serine 26, serine 30, and serine 54. Serine 64 carries the post-translational modification Phosphoserine; by ATM. Residues serine 85, serine 90, serine 112, and serine 114 each carry the phosphoserine modification. 6 WD repeats span residues 167–206 (QPEN…YHEG), 222–267 (EGDT…LRAS), 272–313 (NHLD…RDCE), 323–364 (GQSG…ALLG), 365–405 (GHQG…YPLW), and 411–450 (VTTN…NDGK). Threonine 489 bears the Phosphothreonine mark. Serine 491 bears the Phosphoserine mark. A disordered region spans residues 526–548 (SIPDDHQGEKGQGGTEGGVGELI). Gly residues predominate over residues 535–548 (KGQGGTEGGVGELI).

It belongs to the TCAB1 family. In terms of assembly, component of the telomerase holoenzyme complex composed of one molecule of TERT, one molecule of WRAP53/TCAB1, two molecules of H/ACA ribonucleoprotein complex subunits DKC1, NOP10, NHP2 and GAR1, and a telomerase RNA template component (TERC). The telomerase holoenzyme complex is associated with TEP1, SMG6/EST1A and POT1. Interacts with the chaperonin-containing T-complex (TRiC) complex; which mediates the folding of WRAP53/TCAB1. Interacts with COIL. Interacts with SMN1. Interacts with RNF8. Interacts with histone H2AX. Phosphorylated at Ser-64 by ATM in response to DNA damage, promoting its interaction with histone H2AX and localization to sites of DNA double-strand breaks. As to expression, expressed in all tissues and cell lines examined.

Its subcellular location is the nucleus. It is found in the cajal body. The protein resides in the chromosome. It localises to the telomere. In terms of biological role, RNA chaperone that plays a key role in telomere maintenance and RNA localization to Cajal bodies. Specifically recognizes and binds the Cajal body box (CAB box) present in both small Cajal body RNAs (scaRNAs) and telomerase RNA template component (TERC). Essential component of the telomerase holoenzyme complex, a ribonucleoprotein complex essential for the replication of chromosome termini that elongates telomeres in most eukaryotes. In the telomerase holoenzyme complex, required to stimulate the catalytic activity of the complex. Acts by specifically binding the CAB box of the TERC RNA and controlling the folding of the CR4/CR5 region of the TERC RNA, a critical step for telomerase activity. In addition, also controls telomerase holoenzyme complex localization to Cajal body. During S phase, required for delivery of TERC to telomeres during S phase and for telomerase activity. In addition to its role in telomere maintenance, also required for Cajal body formation, probably by mediating localization of scaRNAs to Cajal bodies. Also plays a role in DNA repair: phosphorylated by ATM in response to DNA damage and relocalizes to sites of DNA double-strand breaks to promote the repair of DNA double-strand breaks. Acts by recruiting the ubiquitin ligase RNF8 to DNA breaks and promote both homologous recombination (HR) and non-homologous end joining (NHEJ). This Homo sapiens (Human) protein is Telomerase Cajal body protein 1.